The following is a 151-amino-acid chain: MEREGVDYHYVNREAIWKGIAAGNFLEHTEFLGNIYGTSKTAVNTAAINNRICVMDLNIDGVRSFKNTYLMPYSVYIRPTSLKMVETKLRCRNTEANDEIHRRVILAKTDMDEANEAGLFDTIIIEDDVNLAYSKLIQILQDRIRMYFNTN.

A Guanylate kinase-like domain is found at 1-141; the sequence is MEREGVDYHY…AYSKLIQILQ (141 aa).

The protein belongs to the guanylate kinase family.

This chain is Guanylate kinase homolog, found in Vaccinia virus (strain Copenhagen) (VACV).